Here is a 553-residue protein sequence, read N- to C-terminus: Cytokine-like nuclear factor N-PAC (553 aa).

One can recognise a PWWP domain in the interval 8–66 (LGDLVWGKLGRYPPWPGKIVNPPKDLKKPRGKKCFFVKFFGTEDHAWIKVEQLKPYHAH). Composition is skewed to basic and acidic residues over residues 92-145 (RAKG…EGKK) and 162-182 (RAQE…KDLT). Positions 92–188 (RAKGKDQTSS…KDLTIPESST (97 aa)) are disordered. The residue at position 130 (S130) is a Phosphoserine. Residue K135 forms a Glycyl lysine isopeptide (Lys-Gly) (interchain with G-Cter in SUMO2) linkage. At S167 the chain carries Phosphoserine. The segment at residues 168–180 (PRKRGRPPKDEKD) is a DNA-binding region (a.T hook). Residues K176, K179, K201, and K211 each participate in a glycyl lysine isopeptide (Lys-Gly) (interchain with G-Cter in SUMO2) cross-link. Positions 214 to 217 (DPHF) are interaction with histone H3. The interaction with KDM1B stretch occupies residues 216–225 (HFHHFLLSQT). Residues K227, K237, K240, and K269 each participate in a glycyl lysine isopeptide (Lys-Gly) (interchain with G-Cter in SUMO2) cross-link. The tract at residues 261-553 (GSITPTDKKI…MSAVYRAYIH (293 aa)) is dehydrogenase domain. 271 to 285 (GFLGLGLMGSGIVSN) lines the NAD(+) pocket. K302 participates in a covalent cross-link: Glycyl lysine isopeptide (Lys-Gly) (interchain with G-Cter in SUMO2). Positions 362 and 505 each coordinate NAD(+). A Phosphoserine modification is found at S540.

The protein belongs to the HIBADH-related family. NP60 subfamily. As to quaternary structure, homotetramere. Interacts with MAPK14. Interacts with KDM1B at nucleosomes; this interaction stimulates H3K4me1 and H3K4me2 demethylation. Binds to mononucleosomes. Interacts with GATA4; the interaction is required for a synergistic activation of GATA4 target genes transcription.

The protein resides in the nucleus. Its subcellular location is the chromosome. In terms of biological role, cytokine-like nuclear factor with chromatin gene reader activity involved in chromatin modification and regulation of gene expression. Acts as a nucleosome-destabilizing factor that is recruited to genes during transcriptional activation. Recognizes and binds histone H3 without a preference for specific epigenetic markers and also binds DNA. Interacts with KDM1B and promotes its histone demethylase activity by facilitating the capture of H3 tails, they form a multifunctional enzyme complex that modifies transcribed chromatin and facilitates Pol II transcription through nucleosomes. Stimulates the acetylation of 'Lys-56' of nucleosomal histone H3 (H3K56ac) by EP300. With GATA4, co-binds a defined set of heart development genes and coregulates their expression during cardiomyocyte differentiation. Regulates p38 MAP kinase activity by mediating stress activation of MAPK14/p38alpha and specifically regulating MAPK14 signaling. Indirectly promotes phosphorylation of MAPK14 and activation of ATF2. The phosphorylation of MAPK14 requires upstream activity of MAP2K4 and MAP2K6. This chain is Cytokine-like nuclear factor N-PAC (GLYR1), found in Pongo abelii (Sumatran orangutan).